Consider the following 594-residue polypeptide: AT-rich interactive domain-containing protein 5A (594 aa).

Residues methionine 1–glutamate 56 are disordered. Positions methionine 1–serine 300 are interaction with SOX9. Serine 23 carries the phosphoserine modification. The ARID domain maps to arginine 55 to lysine 147. Residues lysine 85 and lysine 94 each participate in a glycyl lysine isopeptide (Lys-Gly) (interchain with G-Cter in ubiquitin) cross-link. Positions leucine 146 to serine 223 are disordered. A compositionally biased stretch (basic and acidic residues) spans methionine 165–aspartate 189. Phosphoserine occurs at positions 256 and 289. Disordered stretches follow at residues arginine 281–alanine 331 and alanine 426–histidine 454. Positions serine 297–glutamate 306 are enriched in polar residues. Serine 438 and serine 463 each carry phosphoserine.

As to quaternary structure, interacts with SOX9. Interacts with ESR1. Interacts with RORC. Post-translationally, phosphorylated by MAPK14 on serine residues involving a TLR4 signaling pathway upon lipopolysaccharide (LPS) stimulation leading to its ubiquitination and proteasomal degradation. Ubiquitinated leading to proteasomal degradation; involving WWP1 linked to MAPK14-mediated phosphorylation upon LPS stimulation.

It is found in the nucleus. Functionally, DNA-binding protein that may regulate transcription and act as a repressor by binding to AT-rich stretches in the promoter region of target genes. May positively regulate chondrocyte-specific transcription such as of COL2A1 in collaboration with SOX9 and positively regulate histone H3 acetylation at chondrocyte-specific genes. May stimulate early-stage chondrocyte differentiation and inhibit later stage differention. Can repress ESR1-mediated transcriptional activation; proposed to act as corepressor for selective nuclear hormone receptors. As an RNA-binding protein, involved in the regulation of inflammatory response by stabilizing selective inflammation-related mRNAs, such as STAT3 and TBX21. Also stabilizes IL6 mRNA. Binds to stem loop structures located in the 3'UTRs of IL6, STAT3 and TBX21 mRNAs; at least for STAT3 prevents binding of ZC3H12A to the mRNA stem loop structure thus inhibiting its degradation activity. Contributes to elevated IL6 levels possibly implicated in autoimmunity processes. IL6-dependent stabilization of STAT3 mRNA may promote differentiation of naive CD4+ T-cells into T-helper Th17 cells. In CD4+ T-cells may also inhibit RORC-induced Th17 cell differentiation independently of IL6 signaling. Stabilization of TBX21 mRNA contributes to elevated interferon-gamma secretion in Th1 cells possibly implicated in the establishment of septic shock. Stabilizes TNFRSF4/OX40 mRNA by binding to the conserved stem loop structure in its 3'UTR; thereby competing with the mRNA-destabilizing functions of RC3H1 and endoribonuclease ZC3H12A. This chain is AT-rich interactive domain-containing protein 5A (ARID5A), found in Homo sapiens (Human).